We begin with the raw amino-acid sequence, 341 residues long: tRNA N6-adenosine threonylcarbamoyltransferase (341 aa).

Residues His-111 and His-115 each coordinate Fe cation. Residues 134–138 (LVSGG), Asp-167, Gly-180, and Asn-276 contribute to the substrate site. Fe cation is bound at residue Asp-304.

Belongs to the KAE1 / TsaD family. The cofactor is Fe(2+).

The protein localises to the cytoplasm. The catalysed reaction is L-threonylcarbamoyladenylate + adenosine(37) in tRNA = N(6)-L-threonylcarbamoyladenosine(37) in tRNA + AMP + H(+). In terms of biological role, required for the formation of a threonylcarbamoyl group on adenosine at position 37 (t(6)A37) in tRNAs that read codons beginning with adenine. Is involved in the transfer of the threonylcarbamoyl moiety of threonylcarbamoyl-AMP (TC-AMP) to the N6 group of A37, together with TsaE and TsaB. TsaD likely plays a direct catalytic role in this reaction. The polypeptide is tRNA N6-adenosine threonylcarbamoyltransferase (Stutzerimonas stutzeri (strain A1501) (Pseudomonas stutzeri)).